A 322-amino-acid polypeptide reads, in one-letter code: Transcription factor WRKY45-2 (322 aa).

The interval 67-110 (GGEGSEVQSEVTCGGGASAGGKRKAPAANRKANCRRRTQQSSGN) is disordered. A DNA-binding region (WRKY) is located at residues 112-180 (VVVKNLDDGQ…YIGEHTCRDP (69 aa)). Residues 256 to 284 (SDQEEVLSSLTPGSSAARGGGVAGPFGPD) are disordered.

It belongs to the WRKY group III family. As to expression, expressed in aleurone cells.

The protein localises to the nucleus. Its function is as follows. Transcriptional activator involved in defense responses against pathogens. Acts as a positive regulator of defense responses against the rice blast fungus Magnaporthe oryzae. Acts as a positive regulator of defense responses against the bacterial blight Xanthomonas oryzae pv oryzae (Xoo) and the bacterial streak Xanthomonas oryzae pv oryzicola (Xoc). Acts as a positive regulator of abscisic acid (ABA) signaling that suppresses growth of seedlings. Acts as a negative regulator of salt stress response. Acts as a negative regulator of cold stress response. Acts as a negative regulator of drought stress response. In Oryza sativa subsp. indica (Rice), this protein is Transcription factor WRKY45-2.